The chain runs to 174 residues: Ribosomal RNA large subunit methyltransferase H (174 aa).

Residues Leu90, Gly122, and 141 to 146 (LGELTW) each bind S-adenosyl-L-methionine.

The protein belongs to the RNA methyltransferase RlmH family. As to quaternary structure, homodimer.

It localises to the cytoplasm. It carries out the reaction pseudouridine(1915) in 23S rRNA + S-adenosyl-L-methionine = N(3)-methylpseudouridine(1915) in 23S rRNA + S-adenosyl-L-homocysteine + H(+). In terms of biological role, specifically methylates the pseudouridine at position 1915 (m3Psi1915) in 23S rRNA. This Brucella melitensis biotype 2 (strain ATCC 23457) protein is Ribosomal RNA large subunit methyltransferase H.